A 128-amino-acid polypeptide reads, in one-letter code: MDAVAVYHGKISRETGEKLLLATGLDGSYLLRDSESVPGVYCLCVLYQGYIYTYRVSQTETGSWSAETAPGVHKRFFRKIKNLISAFQKPDQGIVIPLQYPVEKKPSARSTQGATGRRDDPDVFLKTP.

Positions 6–102 (VYHGKISRET…GIVIPLQYPV (97 aa)) constitute an SH2 domain. The interaction with FYN SH3 domain stretch occupies residues 67–92 (ETAPGVHKRFFRKIKNLISAFQKPDQ). N6-acetyllysine is present on Lys89. The disordered stretch occupies residues 104–128 (KKPSARSTQGATGRRDDPDVFLKTP). Residues 116–128 (GRRDDPDVFLKTP) show a composition bias toward basic and acidic residues.

In terms of assembly, interacts with CD84, CD244, LY9, SLAMF1 and FYN. Interacts with NTRK1, NTRK2 and NTRK3.

Its subcellular location is the cytoplasm. Cytoplasmic adapter regulating receptors of the signaling lymphocytic activation molecule (SLAM) family such as SLAMF1, CD244, LY9, CD84, SLAMF6 and SLAMF7. In SLAM signaling seems to cooperate with SH2D1B/EAT-2. Initially it has been proposed that association with SLAMF1 prevents SLAMF1 binding to inhibitory effectors including INPP5D/SHIP1 and PTPN11/SHP-2. However, by simultaneous interactions, recruits FYN which subsequently phosphorylates and activates SLAMF1. Positively regulates CD244/2B4- and CD84-mediated natural killer (NK) cell functions. Can also promote CD48-, SLAMF6 -, LY9-, and SLAMF7-mediated NK cell activation. In the context of NK cell-mediated cytotoxicity enhances conjugate formation with target cells. May also regulate the activity of the neurotrophin receptors NTRK1, NTRK2 and NTRK3. This chain is SH2 domain-containing protein 1A (SH2D1A), found in Bos taurus (Bovine).